A 157-amino-acid chain; its full sequence is MSGFLEGLRCSECIDWGEKRNTIASIAAGVLFFTGWWIIIDAAVIYPTMKDFNHSYHACGVIATIAFLMINAVSNGQVRGDSYSEGCLGQTGARIWLFVGFMLAFGSLIASMWILFGGYVAKEKDIVYPGIAVFFQNAFIFFGGLVFKFGRTEDLWQ.

N-acetylserine is present on Ser-2. Ser-2 bears the Phosphoserine mark. A run of 4 helical transmembrane segments spans residues 26-46 (IAAGVLFFTGWWIIIDAAVIY), 58-78 (ACGVIATIAFLMINAVSNGQV), 95-115 (IWLFVGFMLAFGSLIASMWIL), and 126-146 (IVYPGIAVFFQNAFIFFGGLV).

Belongs to the UPF0220 family.

It localises to the membrane. This Homo sapiens (Human) protein is Transmembrane protein 50A (TMEM50A).